The following is a 41-amino-acid chain: Large ribosomal subunit protein bL36B (41 aa).

This sequence belongs to the bacterial ribosomal protein bL36 family.

This Neisseria meningitidis serogroup B (strain ATCC BAA-335 / MC58) protein is Large ribosomal subunit protein bL36B.